Consider the following 909-residue polypeptide: Ribosome-releasing factor 2, mitochondrial (909 aa).

The N-terminal 15 residues, 1 to 15, are a transit peptide targeting the mitochondrion; that stretch reads MVAAPLLRAHQAARL. Residues 57–367 form the tr-type G domain; the sequence is DRTRNIGIIA…AVTNLLPSPP (311 aa). 66–73 contacts GTP; sequence AHIDAGKT. The segment at 121–148 is disordered; it reads WPPQTAGDGNTTPQEPQTPRSASSHTVN. The span at 127 to 148 shows a compositional bias: polar residues; sequence GDGNTTPQEPQTPRSASSHTVN. GTP-binding positions include 151–155 and 205–208; these read DTPGH and NKLD.

This sequence belongs to the TRAFAC class translation factor GTPase superfamily. Classic translation factor GTPase family. EF-G/EF-2 subfamily.

The protein resides in the mitochondrion. Its function is as follows. Mitochondrial GTPase that mediates the disassembly of ribosomes from messenger RNA at the termination of mitochondrial protein biosynthesis. Not involved in the GTP-dependent ribosomal translocation step during translation elongation. The sequence is that of Ribosome-releasing factor 2, mitochondrial (mef2) from Aspergillus flavus (strain ATCC 200026 / FGSC A1120 / IAM 13836 / NRRL 3357 / JCM 12722 / SRRC 167).